We begin with the raw amino-acid sequence, 431 residues long: Histidinol dehydrogenase (431 aa).

3 residues coordinate NAD(+): Y127, Q185, and N208. Residues S234, Q256, and H259 each coordinate substrate. Zn(2+) contacts are provided by Q256 and H259. Catalysis depends on proton acceptor residues E323 and H324. 4 residues coordinate substrate: H324, D357, E411, and H416. A Zn(2+)-binding site is contributed by D357. H416 is a binding site for Zn(2+).

It belongs to the histidinol dehydrogenase family. It depends on Zn(2+) as a cofactor.

The enzyme catalyses L-histidinol + 2 NAD(+) + H2O = L-histidine + 2 NADH + 3 H(+). The protein operates within amino-acid biosynthesis; L-histidine biosynthesis; L-histidine from 5-phospho-alpha-D-ribose 1-diphosphate: step 9/9. In terms of biological role, catalyzes the sequential NAD-dependent oxidations of L-histidinol to L-histidinaldehyde and then to L-histidine. The protein is Histidinol dehydrogenase of Vibrio vulnificus (strain YJ016).